Here is a 171-residue protein sequence, read N- to C-terminus: Mitochondrial import inner membrane translocase subunit Tim17-A (171 aa).

Cysteine 9 and cysteine 78 are oxidised to a cystine. 3 helical membrane passes run 17–37 (CGGA…FKGF), 63–77 (GGSF…STID), and 113–133 (VGSA…GILL). Positions 144–171 (GPQFTEDHSQLPSSQLPSSPFGDYRQYQ) are disordered. Positions 153–163 (QLPSSQLPSSP) are enriched in low complexity.

The protein belongs to the Tim17/Tim22/Tim23 family. As to quaternary structure, component of the TIM23 complex at least composed of TIMM23, TIMM17 (TIMM17A or TIMM17B) and TIMM50. The complex interacts with the TIMM44 component of the PAM complex and with DNAJC15. In terms of processing, degraded by YMEL1 downstream of the integrated stress response (ISR).

It is found in the mitochondrion inner membrane. Essential component of the TIM23 complex, a complex that mediates the translocation of transit peptide-containing proteins across the mitochondrial inner membrane. The protein is Mitochondrial import inner membrane translocase subunit Tim17-A (Timm17a) of Mus musculus (Mouse).